We begin with the raw amino-acid sequence, 506 residues long: Cobyric acid synthase (506 aa).

Residues 251–448 enclose the GATase cobBQ-type domain; sequence DIDIAVVQVP…LHGLFDSDAF (198 aa). Residue Cys332 is the Nucleophile of the active site. Residue His440 is part of the active site.

The protein belongs to the CobB/CobQ family. CobQ subfamily.

Its pathway is cofactor biosynthesis; adenosylcobalamin biosynthesis. In terms of biological role, catalyzes amidations at positions B, D, E, and G on adenosylcobyrinic A,C-diamide. NH(2) groups are provided by glutamine, and one molecule of ATP is hydrogenolyzed for each amidation. In Citrobacter koseri (strain ATCC BAA-895 / CDC 4225-83 / SGSC4696), this protein is Cobyric acid synthase.